The following is a 603-amino-acid chain: Polypeptide N-acetylgalactosaminyltransferase 9 (603 aa).

The Cytoplasmic segment spans residues 1–6 (MAVARK). A helical; Signal-anchor for type II membrane protein membrane pass occupies residues 7-29 (IRTLLTVNILVFVGIVLFSVYCR). Over 30 to 603 (LQGRSQELVR…IRNWIKHARH (574 aa)) the chain is Lumenal. 2 disulfides stabilise this stretch: Cys141/Cys372 and Cys363/Cys442. The catalytic subdomain A stretch occupies residues 150–261 (LPQVSVVFIF…TGWAEPALSR (112 aa)). Asp191 and Arg222 together coordinate substrate. Residues Asp245, His247, and His377 each coordinate Mn(2+). Residues 318–380 (PIRTPAMIGC…PCSRVAHIER (63 aa)) form a catalytic subdomain B region. Substrate-binding residues include Arg380 and Tyr385. The N-linked (GlcNAc...) asparagine glycan is linked to Asn460. A Ricin B-type lectin domain is found at 464 to 600 (TYGEVRNSKA…KWMIRNWIKH (137 aa)). 3 disulfide bridges follow: Cys477–Cys493, Cys525–Cys540, and Cys567–Cys587.

Belongs to the glycosyltransferase 2 family. GalNAc-T subfamily. Mn(2+) serves as cofactor. Specifically expressed in brain. Not expressed in heart, placenta, lung, liver, skeletal muscle, kidney, pancreas, spleen, thymus, prostate, testis, ovary, small intestine, colon and leukocyte. In brain, it is expressed in cerebellum, frontal lobe, temporal lobe, putamen and spinal cord, weakly expressed in cerebral cortex. Not expressed in medulla and occipital pole.

The protein resides in the golgi apparatus membrane. The enzyme catalyses L-seryl-[protein] + UDP-N-acetyl-alpha-D-galactosamine = a 3-O-[N-acetyl-alpha-D-galactosaminyl]-L-seryl-[protein] + UDP + H(+). The catalysed reaction is L-threonyl-[protein] + UDP-N-acetyl-alpha-D-galactosamine = a 3-O-[N-acetyl-alpha-D-galactosaminyl]-L-threonyl-[protein] + UDP + H(+). It participates in protein modification; protein glycosylation. Functionally, catalyzes the initial reaction in O-linked oligosaccharide biosynthesis, the transfer of an N-acetyl-D-galactosamine residue to a serine or threonine residue on the protein receptor. Does not glycosylate apomucin or SDC3. The polypeptide is Polypeptide N-acetylgalactosaminyltransferase 9 (GALNT9) (Homo sapiens (Human)).